Here is a 323-residue protein sequence, read N- to C-terminus: E3 ubiquitin-protein ligase SIRP1 (323 aa).

The segment at C199–R240 adopts an RING-type; atypical zinc-finger fold. Disordered stretches follow at residues T248–N280 and R296–S323. Basic and acidic residues predominate over residues R259 to A269.

Its subcellular location is the cytoplasm. It catalyses the reaction S-ubiquitinyl-[E2 ubiquitin-conjugating enzyme]-L-cysteine + [acceptor protein]-L-lysine = [E2 ubiquitin-conjugating enzyme]-L-cysteine + N(6)-ubiquitinyl-[acceptor protein]-L-lysine.. The protein operates within protein modification; protein ubiquitination. Its function is as follows. Possesses E3 ubiqutin-protein ligase activity in vitro. Acts as negative regulator of salinity stress tolerance mediated by the ubiquitin-proteasome degradation pathway. This chain is E3 ubiquitin-protein ligase SIRP1, found in Oryza sativa subsp. japonica (Rice).